The following is a 611-amino-acid chain: Mitochondrial import receptor subunit TOM70 (611 aa).

Alanine 2 carries the N-acetylalanine modification. The Mitochondrial intermembrane portion of the chain corresponds to 2 to 41 (AASKPIEAAMAAAAAPGSGNGVGGGGGTAGPGSGAGTLPR). A helical transmembrane segment spans residues 42–62 (WHVALAIGAPLLLGAGAMYLW). The Cytoplasmic portion of the chain corresponds to 63-611 (SRRRRRREAG…KKYGLKPPTL (549 aa)). The interval 69–110 (REAGGRGDASGLKRNSERKTPEGRASPALGSGHHDGSGDSLE) is disordered. An Omega-N-methylarginine modification is found at arginine 74. Phosphoserine occurs at positions 94, 99, 105, 108, and 113. TPR repeat units follow at residues 117–150 (AQAA…CPTE) and 156–189 (STFY…NPKY). The residue at position 188 (lysine 188) is an N6-acetyllysine. Lysine 278 participates in a covalent cross-link: Glycyl lysine isopeptide (Lys-Gly) (interchain with G-Cter in SUMO2). TPR repeat units follow at residues 297-330 (ENSG…QGKY), 332-365 (AEAL…KEAN), 370-403 (ANAL…DPMN), 404-437 (SDVY…RPKF), 445-478 (CFAL…FPRC), 479-512 (AEGY…EPDN), 514-547 (TTYV…DNKC), and 548-581 (DFAY…AKSE).

It belongs to the Tom70 family. Forms part of the preprotein translocase complex of the outer mitochondrial membrane (TOM complex) which consists of at least 7 different proteins (TOMM5, TOMM6, TOMM7, TOMM20, TOMM22, TOMM40 and TOMM70). Interacts with CAPN8. Interacts with TRADD, TRAF6 and STING. Interacts with MAVS. Interacts with HSPA8 and HSP90AA1; both interactions are required for preprotein mitochondrial import. The interaction with HSP90AA1 is direct and mediates the association of TOMM70 with IRF3 and TBK1. Upon mitochondrial depolarization, interacts with PINK1; the interaction is required for PINK1-TOM-TIM23 supercomplex formation which is critical for PINK1 stabilization at the outer mitochondrial membrane, kinase activation and downstream mitophagy. Expressed in the base region of the oxyntic and pyloric mucosae.

It is found in the mitochondrion outer membrane. Its function is as follows. Acts as a receptor of the preprotein translocase complex of the outer mitochondrial membrane (TOM complex). Recognizes and mediates the translocation of mitochondrial preproteins from the cytosol into the mitochondria in a chaperone dependent manner. Mediates TBK1 and IRF3 activation induced by MAVS in response to virus infection and promotes host antiviral responses during virus infection. The sequence is that of Mitochondrial import receptor subunit TOM70 from Mus musculus (Mouse).